The following is a 541-amino-acid chain: Phenazine N-monooxygenase PhzNO1 (541 aa).

Residues Asp39, 47–50 (TWYW), 59–60 (DT), Tyr65, and Ile112 each bind FAD. Position 57–59 (57–59 (RAD)) interacts with NADP(+). NADP(+) contacts are provided by residues 186–192 (TGSTGVQ), 209–210 (RS), and Trp492.

The protein belongs to the FAD-binding monooxygenase family. FAD serves as cofactor.

It carries out the reaction 1,6-dihydroxyphenazine + NADPH + O2 = 1,6-dihydroxyphenazine N(5)-oxide + NADP(+) + H2O. The enzyme catalyses 1,6-dihydroxyphenazine N(5)-oxide + NADPH + O2 = 1,6-dihydroxyphenazine N(5),N(10)-dioxide + NADP(+) + H2O. It catalyses the reaction 1-hydroxy-6-methoxyphenazine + NADPH + O2 = 1-hydroxy-6-methoxyphenazine N(10)-oxide + NADP(+) + H2O. The catalysed reaction is quinolin-8-ol + NADPH + O2 = 8-hydroxyquinoline N-oxide + NADP(+) + H2O. Involved in the biosynthesis of phenazine natural products including myxin, an N(5),N(10)-dioxide phenazine antiobiotic, which has antimicrobial activity. Catalyzes the aromatic N-oxidations of phenazines, such as 1,6-dihydroxyphenazine (DHP), 1,6-dihydroxyphenazine N(5)-oxide (DHPO) and 1-hydroxy-6-methoxyphenazine to produce DHPO, iodinin (1,6-dihydroxyphenazine N(5),N(10)-dioxide) and 1-hydroxy-6-methoxyphenazine N(10)-oxide, respectively. Also catalyzes the N-oxidation of 8-hydroxyquinoline, but not 6-hydroxyquinoline (6-HQ), quinoline, quinoxaline, quinine and 2-phenylpyridine. This chain is Phenazine N-monooxygenase PhzNO1, found in Lysobacter antibioticus.